Here is a 1016-residue protein sequence, read N- to C-terminus: C2 domain-containing protein 5 (1016 aa).

The region spanning 1–109 (MPGKLKVKIV…EAATVISGWF (109 aa)) is the C2 domain. The Ca(2+) site is built by Asp19, Asp26, Asp76, Asp78, Ser81, and Asp84. The residue at position 197 (Ser197) is a Phosphoserine; by PKB/AKT2. A phosphoserine mark is found at Ser200 and Ser260. Residues 265 to 330 (LKEIPFNEDP…SGSAGKEGGP (66 aa)) form a disordered region. The span at 274–289 (PNPNTHSSGPSTPLKN) shows a compositional bias: polar residues. A compositionally biased stretch (low complexity) spans 290 to 318 (QTYSFSPSKSYSRQSSSSDTDLSLTPKTG). 5 positions are modified to phosphoserine: Ser293, Ser295, Ser304, Ser305, and Ser306. Phosphothreonine is present on Thr317. The span at 319–328 (MGSGSAGKEG) shows a compositional bias: gly residues. Ser323 carries the phosphoserine modification. Thr601 carries the post-translational modification Phosphothreonine. The interval 636-668 (VSEEMIGSPIPEPRQRSRLLRSQSESSDEVTEL) is disordered. 5 positions are modified to phosphoserine: Ser643, Ser657, Ser659, Ser661, and Ser662. At Thr666 the chain carries Phosphothreonine. Phosphoserine is present on residues Ser671, Ser817, and Ser869.

It depends on Ca(2+) as a cofactor. Post-translationally, phosphorylated on Ser-197 by active myristoylated kinase AKT2; insulin-stimulated phosphorylation by AKT2 regulates SLC2A4/GLUT4 translocation into the plasma membrane. As to expression, expressed in liver, muscle and fat.

It localises to the cytoplasmic vesicle membrane. The protein localises to the cytoplasm. Its subcellular location is the cell cortex. The protein resides in the cell membrane. It is found in the cell projection. It localises to the ruffle. Functionally, required for insulin-stimulated glucose transport and glucose transporter SLC2A4/GLUT4 translocation from intracellular glucose storage vesicle (GSV) to the plasma membrane (PM) in adipocytes. Binds phospholipid membranes in a calcium-dependent manner and is necessary for the optimal membrane fusion between SLC2A4/GLUT4 GSV and the PM. This is C2 domain-containing protein 5 (C2cd5) from Mus musculus (Mouse).